Reading from the N-terminus, the 1484-residue chain is Glutamate receptor ionotropic, NMDA 2B (1484 aa).

The first 26 residues, 1–26 (MKPRAECCSPKFWLVLAVLAVSGSRA), serve as a signal peptide directing secretion. At 27–555 (RSQKSPPSIG…SPSAFLEPFS (529 aa)) the chain is on the extracellular side. The N-linked (GlcNAc...) asparagine glycan is linked to N74. C86 and C321 are joined by a disulfide. Zn(2+)-binding residues include H127 and E284. N-linked (GlcNAc...) asparagine glycans are attached at residues N341, N348, N444, and N491. 2 cysteine pairs are disulfide-bonded: C429–C456 and C436–C457. L-glutamate is bound by residues T514 and R519. An N-linked (GlcNAc...) asparagine glycan is attached at N542. Residues 556–576 (ADVWVMMFVMLLIVSAVAVFV) form a helical membrane-spanning segment. Residues 577 to 601 (FEYFSPVGYNRCLADGREPGGPSFT) lie on the Cytoplasmic side of the membrane. An intramembrane region (discontinuously helical) is located at residues 602–613 (IGKAIWLLWGLV). Residues 604-623 (KAIWLLWGLVFNNSVPVQNP) form a pore-forming region. Topologically, residues 614-627 (FNNSVPVQNPKGTT) are cytoplasmic. Residues 628–647 (SKIMVSVWAFFAVIFLASYT) form a helical membrane-spanning segment. Residues 648-819 (ANLAAFMIQE…SSQLDIDNMA (172 aa)) are Extracellular-facing. N-linked (GlcNAc...) asparagine glycosylation occurs at N688. Residues 690-691 (ST) and D732 contribute to the L-glutamate site. The helical transmembrane segment at 820 to 835 (GVFYMLGAAMALSLIT) threads the bilayer. At 836–1484 (FICEHLFYWQ…EKLSSIESDV (649 aa)) the chain is on the cytoplasmic side. S882, S886, S917, and S920 each carry phosphoserine. Phosphotyrosine occurs at positions 962 and 1039. A phosphoserine mark is found at S1058, S1061, and S1064. Positions 1074 to 1097 (EGNAAKRRKQQYKDSLKKRPASAK) are disordered. A phosphotyrosine mark is found at Y1109 and Y1133. S1143 is modified (phosphoserine). Y1155 bears the Phosphotyrosine mark. The interval 1161 to 1194 (DFKRDSVSGGGPCTNRSHIKHGTGDKHGVVSGVP) is disordered. 2 positions are modified to phosphoserine: S1255 and S1259. Residues 1271 to 1301 (AVTSNASTTKYPQSPTNSKAQKKNRNKLRRQ) are disordered. Positions 1272–1289 (VTSNASTTKYPQSPTNSK) are enriched in polar residues. Basic residues predominate over residues 1290–1301 (AQKKNRNKLRRQ). The interaction with DAPK1 stretch occupies residues 1292–1304 (KKNRNKLRRQHSY). Phosphoserine; by DAPK1 is present on S1303. The residue at position 1474 (Y1474) is a Phosphotyrosine. Positions 1482–1484 (SDV) match the PDZ-binding motif.

It belongs to the glutamate-gated ion channel (TC 1.A.10.1) family. NR2B/GRIN2B subfamily. As to quaternary structure, heterotetramer. Forms heterotetrameric channels composed of two GluN1/zeta subunits (GRIN1), and two identical GluN2/epsilon subunits (GRIN2A, GRIN2B, GRIN2C or GRIN2D) or GluN3 subunits (GRIN3A or GRIN3B) (in vitro). Can also form heterotetrameric channels that contain at least two GluN1 subunits and at least two different GluN2 subunits (or a combination of one GluN2 and one GluN3 subunits) (in vitro). In vivo, the subunit composition may depend on the expression levels of the different subunits. Found in a complex with GRIN1 and GRIN3B. Found in a complex with GRIN1, GRIN3A and PPP2CB. Interacts with PDZ domains of PATJ, DLG3 and DLG4. Interacts with HIP1 and NETO1. Interacts with MAGI3. Interacts with DAPK1. Found in a complex with GRIN1 and PRR7. Interacts with PRR7. Interacts with CAMK2A. Interacts with ARC; preventing ARC oligomerization. Interacts with TMEM25. Interacts (via the extreme C-terminus) with FRMPD2 (via the second PDZ domain); the interaction is direct and is likely to promote NMDAR-mediated neural signal transmission. Interacts with FAM81A; the interaction facilitates condensate formation via liquid-liquid phase separation. Phosphorylated on tyrosine residues. Phosphorylation at Ser-1303 by DAPK1 enhances synaptic NMDA receptor channel activity. In terms of tissue distribution, primarily found in the fronto-parieto-temporal cortex and hippocampus pyramidal cells, lower expression in the basal ganglia.

The protein localises to the cell membrane. It localises to the postsynaptic cell membrane. It is found in the cell projection. Its subcellular location is the dendrite. The protein resides in the late endosome. The protein localises to the lysosome. It localises to the cytoplasm. It is found in the cytoskeleton. The enzyme catalyses Ca(2+)(in) = Ca(2+)(out). It carries out the reaction Na(+)(in) = Na(+)(out). The catalysed reaction is K(+)(in) = K(+)(out). Component of N-methyl-D-aspartate (NMDA) receptors (NMDARs) that function as heterotetrameric, ligand-gated cation channels with high calcium permeability and voltage-dependent block by Mg(2+). Participates in synaptic plasticity for learning and memory formation by contributing to the long-term depression (LTD) of hippocampus membrane currents. Channel activation requires binding of the neurotransmitter L-glutamate to the GluN2 subunit, glycine or D-serine binding to the GluN1 subunit, plus membrane depolarization to eliminate channel inhibition by Mg(2+). NMDARs mediate simultaneously the potasium efflux and the influx of calcium and sodium. Each GluN2 subunit confers differential attributes to channel properties, including activation, deactivation and desensitization kinetics, pH sensitivity, Ca2(+) permeability, and binding to allosteric modulators. In concert with DAPK1 at extrasynaptic sites, acts as a central mediator for stroke damage. Its phosphorylation at Ser-1303 by DAPK1 enhances synaptic NMDA receptor channel activity inducing injurious Ca2+ influx through them, resulting in an irreversible neuronal death. This is Glutamate receptor ionotropic, NMDA 2B from Homo sapiens (Human).